A 143-amino-acid chain; its full sequence is AP-4 complex subunit sigma (143 aa).

The protein belongs to the adaptor complexes small subunit family. As to quaternary structure, adaptor protein complex 4 (AP-4) is a heterotetramer composed of two large adaptins (epsilon-type subunit and beta-type subunit), a medium adaptin (mu-type subunit) and a small adaptin (sigma-type subunit). Interacts with EHD2.

It is found in the golgi apparatus. The protein resides in the trans-Golgi network. Its subcellular location is the membrane. The protein localises to the coated pit. Functionally, subunit of novel type of clathrin- or non-clathrin-associated protein coat involved in targeting proteins from the trans-Golgi network (TGN) to the endosomal-lysosomal system. This Arabidopsis thaliana (Mouse-ear cress) protein is AP-4 complex subunit sigma.